Consider the following 56-residue polypeptide: Pituitary adenylate cyclase-activating polypeptide (56 aa).

Positions 42-50 (VKKYLAAVL) are important for receptor binding. Leu50 is modified (leucine amide).

The protein belongs to the glucagon family. In terms of assembly, interacts with ADCYAP1R1 (via N-terminal extracellular domain).

It localises to the secreted. Functionally, PACAP is a neuropeptide involved in diverse array of physiological processes through activating the PACAP subfamily of class B1 G protein-coupled receptors: VIP receptor 1 (VIPR1), VIP receptor 2 (VIPR2), and PACAP type I receptor (ADCYAP1R1). Exerts neuroprotective and general cytoprotective effects due to anti-apoptotic, anti-inflammatory, and antioxidant actions. The sequence is that of Pituitary adenylate cyclase-activating polypeptide (Adcyap1) from Heloderma suspectum (Gila monster).